The chain runs to 197 residues: MIDFDGYRPNVGIVICNRKGQVLWAKRYGQNSWQYPQGGINDGETPEQAMYRELYEEVGLTRRDVRIVYASKQWLRYKLPKRLLRYDSKPMCIGQKQRWFLVQLMSDEKNINMNCSKSPEFDGWRWVSFWYPVRQVVSFKRDVYRKAMKEFACFLFDANKTVNPLSTNNNDEKKANYSAKKPYSPYRNQDKKRKTRV.

The 144-residue stretch at 6–149 (GYRPNVGIVI…KRDVYRKAMK (144 aa)) folds into the Nudix hydrolase domain. Residues 38–59 (GGINDGETPEQAMYRELYEEVG) carry the Nudix box motif. The interval 165-197 (LSTNNNDEKKANYSAKKPYSPYRNQDKKRKTRV) is disordered.

Belongs to the Nudix hydrolase family. RppH subfamily. A divalent metal cation is required as a cofactor.

In terms of biological role, accelerates the degradation of transcripts by removing pyrophosphate from the 5'-end of triphosphorylated RNA, leading to a more labile monophosphorylated state that can stimulate subsequent ribonuclease cleavage. This chain is RNA pyrophosphohydrolase, found in Mannheimia succiniciproducens (strain KCTC 0769BP / MBEL55E).